The sequence spans 301 residues: Putative glycosyltransferase MJ1113 (301 aa).

8 helical membrane passes run 2-22 (GHYF…SAVL), 62-82 (FIPF…IIGI), 95-115 (LILL…NSYV), 117-137 (LIEI…TNML), 140-160 (FNGL…LVLF), 164-184 (YTTG…LLIF), 191-211 (VFPG…LAVV), and 280-300 (VTVL…ISLI).

Belongs to the glycosyltransferase 4 family.

The protein resides in the cell membrane. This Methanocaldococcus jannaschii (strain ATCC 43067 / DSM 2661 / JAL-1 / JCM 10045 / NBRC 100440) (Methanococcus jannaschii) protein is Putative glycosyltransferase MJ1113.